A 414-amino-acid chain; its full sequence is Cyclin-B1-3 (414 aa).

The protein belongs to the cyclin family. Cyclin AB subfamily. As to expression, expressed in roots, stems and flowers.

This Arabidopsis thaliana (Mouse-ear cress) protein is Cyclin-B1-3 (CYCB1-3).